A 75-amino-acid chain; its full sequence is Brevinin-2HS2A (75 aa).

The first 22 residues, M1–C22, serve as a signal peptide directing secretion. The propeptide occupies Q23–V40. A disulfide bridge connects residues C69 and C75.

It belongs to the frog skin active peptide (FSAP) family. Brevinin subfamily. Expressed by the skin glands.

The protein resides in the secreted. Functionally, has antimicrobial activity against some Gram-positive bacteria and fungi but has no activity against a range of Gram-negative bacteria except P.faecalis. Has antimicrobial activity against the Gram-positive bacteria S.aureus ATCC 25923 (MIC=19 uM), B.licheniformis X39 (MIC=37.5 uM) and R.rhodochrous X15 (MIC=9.5 uM), is virtually inactive against E.faecium 091299 (MIC=150 uM) and S.carnosus KHS (MIC=150 uM) and inactive against E.faecalis 981. Active against the Gram-negative bacterium P.faecalis X29 (MIC=9.5 uM) and is inactive against E.coli, P.aeruginosa and S.typhi. Active against C.albicans ATCC 2002 (MIC=19 uM) and is also active against the slime mold 090223 (MIC=37.5 uM). Has extremely low hemolytic activity against human erythrocytes (LC(50)=300 uM). The sequence is that of Brevinin-2HS2A from Odorrana hainanensis (Odor frog).